Consider the following 853-residue polypeptide: Aminotransferase PigE (853 aa).

Residue 503-504 (GT) participates in pyridoxal 5'-phosphate binding. An N6-(pyridoxal phosphate)lysine modification is found at Lys645. A pyridoxal 5'-phosphate-binding site is contributed by Thr680.

This sequence belongs to the class-III pyridoxal-phosphate-dependent aminotransferase family. Homodimer. Pyridoxal 5'-phosphate serves as cofactor.

It functions in the pathway antibiotic biosynthesis; prodigiosin biosynthesis. Involved in the biosynthesis of 2-methyl-3-n-amyl-pyrrole (MAP), one of the terminal products involved in the biosynthesis of the red antibiotic prodigiosin (Pig). Catalyzes the transamination to the aldehyde group of 3-acetyloctanal, resulting in an aminoketone, which spontaneously cyclizes to yield the dihydro form of MAP (H2MAP). This Serratia sp. (strain ATCC 39006) (Prodigiosinella confusarubida) protein is Aminotransferase PigE.